The chain runs to 392 residues: MNMRLGMPEAPAPGLAPRRITRQLMVGNVGVGSDHQISVQSMCITKTHDVNATLQQIAELTTAGCDIVRVACPRQEDADALAEIARHSKIPVIVDIHFQPKYIFAAIDAGCAAVRVNPGNIKEFDGRVGEVAKAAAAAGIPIRIGVNAGSLDKRFMDKYGKATSEALVESALWEASLFEEHGFGNIKISVKHHDPVVMVAAYEQLAAQCDYPLHLGVTEAGPVFQGTVKSAVAFGALLSKGIGDTIRVSLSAPPVEEIKVGNQILESLNLRPRSHEIVSCPSCGRAQVDVYKLANEVSAGLDGLEVPLRIAVMGCVVNGPGEARDADLGVASGNGKGQIFVKGEVIKTVPEAQIVETLIEEAMRLVSEMGTEKGSDHCSETTRSGSPVVTVN.

[4Fe-4S] cluster-binding residues include Cys280, Cys283, Cys315, and Glu322. Residues Thr371 to Glu380 show a composition bias toward basic and acidic residues. The segment at Thr371–Asn392 is disordered. Residues Thr381–Asn392 are compositionally biased toward polar residues.

It belongs to the IspG family. Requires [4Fe-4S] cluster as cofactor.

It carries out the reaction (2E)-4-hydroxy-3-methylbut-2-enyl diphosphate + oxidized [flavodoxin] + H2O + 2 H(+) = 2-C-methyl-D-erythritol 2,4-cyclic diphosphate + reduced [flavodoxin]. It functions in the pathway isoprenoid biosynthesis; isopentenyl diphosphate biosynthesis via DXP pathway; isopentenyl diphosphate from 1-deoxy-D-xylulose 5-phosphate: step 5/6. Functionally, converts 2C-methyl-D-erythritol 2,4-cyclodiphosphate (ME-2,4cPP) into 1-hydroxy-2-methyl-2-(E)-butenyl 4-diphosphate. The protein is 4-hydroxy-3-methylbut-2-en-1-yl diphosphate synthase (flavodoxin) of Mycobacterium leprae (strain Br4923).